Here is a 697-residue protein sequence, read N- to C-terminus: Elongation factor G 2 (697 aa).

The tr-type G domain maps to 5–280 (SKYRNIGIFA…AVVDYLPAPD (276 aa)). Residues 14-21 (AHVDAGKT), 78-82 (DTPGH), and 132-135 (NKLD) each bind GTP.

Belongs to the TRAFAC class translation factor GTPase superfamily. Classic translation factor GTPase family. EF-G/EF-2 subfamily.

It localises to the cytoplasm. In terms of biological role, catalyzes the GTP-dependent ribosomal translocation step during translation elongation. During this step, the ribosome changes from the pre-translocational (PRE) to the post-translocational (POST) state as the newly formed A-site-bound peptidyl-tRNA and P-site-bound deacylated tRNA move to the P and E sites, respectively. Catalyzes the coordinated movement of the two tRNA molecules, the mRNA and conformational changes in the ribosome. In Shewanella sp. (strain MR-7), this protein is Elongation factor G 2.